We begin with the raw amino-acid sequence, 358 residues long: Peptide chain release factor 1 (358 aa).

An N5-methylglutamine modification is found at glutamine 233.

This sequence belongs to the prokaryotic/mitochondrial release factor family. In terms of processing, methylated by PrmC. Methylation increases the termination efficiency of RF1.

It localises to the cytoplasm. In terms of biological role, peptide chain release factor 1 directs the termination of translation in response to the peptide chain termination codons UAG and UAA. The sequence is that of Peptide chain release factor 1 from Beijerinckia indica subsp. indica (strain ATCC 9039 / DSM 1715 / NCIMB 8712).